Consider the following 409-residue polypeptide: NADH-quinone oxidoreductase subunit D (409 aa).

This sequence belongs to the complex I 49 kDa subunit family. In terms of assembly, NDH-1 is composed of 14 different subunits. Subunits NuoB, C, D, E, F, and G constitute the peripheral sector of the complex.

The protein resides in the cell inner membrane. The enzyme catalyses a quinone + NADH + 5 H(+)(in) = a quinol + NAD(+) + 4 H(+)(out). Its function is as follows. NDH-1 shuttles electrons from NADH, via FMN and iron-sulfur (Fe-S) centers, to quinones in the respiratory chain. The immediate electron acceptor for the enzyme in this species is believed to be ubiquinone. Couples the redox reaction to proton translocation (for every two electrons transferred, four hydrogen ions are translocated across the cytoplasmic membrane), and thus conserves the redox energy in a proton gradient. The chain is NADH-quinone oxidoreductase subunit D from Helicobacter pylori (strain HPAG1).